Consider the following 255-residue polypeptide: MNKKRRLEKILDMLKIDGTITIKEIIDELDISDMTARRDLDALEADGLLTRTHGGAQLLSSKKPLEKTHIEKKSLNTKEKIDIAKKACSLIKDGDTIFIGPGTTLVQLALELKGRKGYKIRVITNSLPVFLILNDSETIDLLLLGGEYREITGAFVGSMASTNLKAMRFAKAFVRANAVTHNSIATYSDKEGVIQQLALNNAVEKFLLVDSTKFDRYDFFNFYNLDQLDTIITDNQISPQHLEEFSQYTTILKAD.

In terms of domain architecture, HTH deoR-type spans 3-58 (KKRRLEKILDMLKIDGTITIKEIIDELDISDMTARRDLDALEADGLLTRTHGGAQL). Residues 20-39 (ITIKEIIDELDISDMTARRD) constitute a DNA-binding region (H-T-H motif).

Functionally, repressor of the lactose catabolism operon. Galactose-6-phosphate is the inducer. This Lactococcus lactis subsp. lactis (Streptococcus lactis) protein is Lactose phosphotransferase system repressor (lacR).